A 1121-amino-acid polypeptide reads, in one-letter code: RecBCD enzyme subunit RecC (1121 aa).

The protein belongs to the RecC family. As to quaternary structure, heterotrimer of RecB, RecC and RecD. All subunits contribute to DNA-binding.

A helicase/nuclease that prepares dsDNA breaks (DSB) for recombinational DNA repair. Binds to DSBs and unwinds DNA via a highly rapid and processive ATP-dependent bidirectional helicase activity. Unwinds dsDNA until it encounters a Chi (crossover hotspot instigator) sequence from the 3' direction. Cuts ssDNA a few nucleotides 3' to the Chi site. The properties and activities of the enzyme are changed at Chi. The Chi-altered holoenzyme produces a long 3'-ssDNA overhang and facilitates RecA-binding to the ssDNA for homologous DNA recombination and repair. Holoenzyme degrades any linearized DNA that is unable to undergo homologous recombination. In the holoenzyme this subunit recognizes the wild-type Chi sequence, and when added to isolated RecB increases its ATP-dependent helicase processivity. In Haemophilus influenzae (strain ATCC 51907 / DSM 11121 / KW20 / Rd), this protein is RecBCD enzyme subunit RecC.